Reading from the N-terminus, the 241-residue chain is 3-oxoacyl-[acyl-carrier-protein] reductase FabG (241 aa).

NADP(+)-binding positions include Gly13–Gly16, Ser38, Glu57–Ile58, and Asn83. Ser135 contacts substrate. Catalysis depends on Tyr148, which acts as the Proton acceptor. Residues Tyr148–Lys152 and Ile181 each bind NADP(+).

This sequence belongs to the short-chain dehydrogenases/reductases (SDR) family. In terms of assembly, homotetramer.

It carries out the reaction a (3R)-hydroxyacyl-[ACP] + NADP(+) = a 3-oxoacyl-[ACP] + NADPH + H(+). The protein operates within lipid metabolism; fatty acid biosynthesis. Its function is as follows. Catalyzes the NADPH-dependent reduction of beta-ketoacyl-ACP substrates to beta-hydroxyacyl-ACP products, the first reductive step in the elongation cycle of fatty acid biosynthesis. This is 3-oxoacyl-[acyl-carrier-protein] reductase FabG (fabG) from Rickettsia felis (strain ATCC VR-1525 / URRWXCal2) (Rickettsia azadi).